A 348-amino-acid chain; its full sequence is ECA polysaccharide chain length modulation protein (348 aa).

2 consecutive transmembrane segments (helical) span residues 31-51 (FWII…TFFA) and 323-343 (AFLM…VALT).

The protein belongs to the WzzB/Cld/Rol family. Probably part of a complex composed of WzxE, WzyE and WzzE.

It localises to the cell inner membrane. It participates in bacterial outer membrane biogenesis; enterobacterial common antigen biosynthesis. Functionally, modulates the polysaccharide chain length of enterobacterial common antigen (ECA). This chain is ECA polysaccharide chain length modulation protein, found in Salmonella typhimurium (strain LT2 / SGSC1412 / ATCC 700720).